A 176-amino-acid chain; its full sequence is MNIDAISIGSNPPEDVNVIIEVPVGGQPIKYEMDKKAGALIVDRFLYTPMTYPGNYGFVPHTLSEDGDPIDVLVCNTRPLIPGCVINVRPIGVLVMEDNSGKDEKIIAVPSPHLTRRYEKIHDYTDMPEITLKQIAHFFEHYKDLEPGKWVKIGDWGDEDYARKFIVEAIERAKGK.

The substrate site is built by K30, R44, and Y56. Residues D66, D71, and D103 each contribute to the Mg(2+) site. Position 142 (Y142) interacts with substrate.

Belongs to the PPase family. Homohexamer. Requires Mg(2+) as cofactor.

It is found in the cytoplasm. It carries out the reaction diphosphate + H2O = 2 phosphate + H(+). Its function is as follows. Catalyzes the hydrolysis of inorganic pyrophosphate (PPi) forming two phosphate ions. This is Inorganic pyrophosphatase from Brucella melitensis biotype 1 (strain ATCC 23456 / CCUG 17765 / NCTC 10094 / 16M).